The sequence spans 1028 residues: Carbamoyl phosphate synthase large chain (1028 aa).

Residues 1-409 (MPPRRDLKKI…ALMKALRGLE (409 aa)) are carboxyphosphate synthetic domain. ATP is bound by residues arginine 129, arginine 169, glycine 175, glycine 176, glutamate 208, valine 210, glutamate 215, glycine 241, valine 242, histidine 243, glutamine 285, and glutamate 299. The region spanning 133-328 (QEAMRRIDLE…IAKIAALLAV (196 aa)) is the ATP-grasp 1 domain. Positions 285, 299, and 301 each coordinate Mg(2+). 3 residues coordinate Mn(2+): glutamine 285, glutamate 299, and asparagine 301. Positions 410 to 549 (RDVRALAGVR…YSTYELEDEV (140 aa)) are oligomerization domain. Residues 550-933 (WPSQKPKVVI…AYYKAELGAG (384 aa)) form a carbamoyl phosphate synthetic domain region. An ATP-grasp 2 domain is found at 674-866 (HALCQRLGIP…LAKLAALIAV (193 aa)). Positions 710, 750, 752, 757, 782, 783, 784, 785, 825, and 837 each coordinate ATP. Mg(2+)-binding residues include glutamine 825, glutamate 837, and asparagine 839. Residues glutamine 825, glutamate 837, and asparagine 839 each contribute to the Mn(2+) site. Residues 934 to 1028 (QRLPLSGQVR…QDWHQKAPRG (95 aa)) enclose the MGS-like domain. The allosteric domain stretch occupies residues 934 to 1028 (QRLPLSGQVR…QDWHQKAPRG (95 aa)).

The protein belongs to the CarB family. As to quaternary structure, composed of two chains; the small (or glutamine) chain promotes the hydrolysis of glutamine to ammonia, which is used by the large (or ammonia) chain to synthesize carbamoyl phosphate. Tetramer of heterodimers (alpha,beta)4. It depends on Mg(2+) as a cofactor. Requires Mn(2+) as cofactor.

It carries out the reaction hydrogencarbonate + L-glutamine + 2 ATP + H2O = carbamoyl phosphate + L-glutamate + 2 ADP + phosphate + 2 H(+). It catalyses the reaction hydrogencarbonate + NH4(+) + 2 ATP = carbamoyl phosphate + 2 ADP + phosphate + 2 H(+). Its pathway is amino-acid biosynthesis; L-arginine biosynthesis; carbamoyl phosphate from bicarbonate: step 1/1. It functions in the pathway pyrimidine metabolism; UMP biosynthesis via de novo pathway; (S)-dihydroorotate from bicarbonate: step 1/3. Functionally, large subunit of the glutamine-dependent carbamoyl phosphate synthetase (CPSase). CPSase catalyzes the formation of carbamoyl phosphate from the ammonia moiety of glutamine, carbonate, and phosphate donated by ATP, constituting the first step of 2 biosynthetic pathways, one leading to arginine and/or urea and the other to pyrimidine nucleotides. The large subunit (synthetase) binds the substrates ammonia (free or transferred from glutamine from the small subunit), hydrogencarbonate and ATP and carries out an ATP-coupled ligase reaction, activating hydrogencarbonate by forming carboxy phosphate which reacts with ammonia to form carbamoyl phosphate. This Thermus thermophilus (strain ATCC BAA-163 / DSM 7039 / HB27) protein is Carbamoyl phosphate synthase large chain.